Here is a 360-residue protein sequence, read N- to C-terminus: Phospho-N-acetylmuramoyl-pentapeptide-transferase (360 aa).

10 helical membrane-spanning segments follow: residues 26–46 (AILA…KLIE), 74–94 (MGGL…GDLG), 97–117 (YVWV…IDDY), 132–152 (WKYI…FYST), 168–188 (ILPQ…VGAS), 199–219 (GLAI…AYLS), 236–256 (SGEL…FLWF), 263–283 (VFMG…IAVL), 288–308 (ILLV…ILQV), and 338–358 (VIVR…ATLK).

This sequence belongs to the glycosyltransferase 4 family. MraY subfamily. Mg(2+) is required as a cofactor.

It localises to the cell inner membrane. It carries out the reaction UDP-N-acetyl-alpha-D-muramoyl-L-alanyl-gamma-D-glutamyl-meso-2,6-diaminopimeloyl-D-alanyl-D-alanine + di-trans,octa-cis-undecaprenyl phosphate = di-trans,octa-cis-undecaprenyl diphospho-N-acetyl-alpha-D-muramoyl-L-alanyl-D-glutamyl-meso-2,6-diaminopimeloyl-D-alanyl-D-alanine + UMP. The protein operates within cell wall biogenesis; peptidoglycan biosynthesis. Catalyzes the initial step of the lipid cycle reactions in the biosynthesis of the cell wall peptidoglycan: transfers peptidoglycan precursor phospho-MurNAc-pentapeptide from UDP-MurNAc-pentapeptide onto the lipid carrier undecaprenyl phosphate, yielding undecaprenyl-pyrophosphoryl-MurNAc-pentapeptide, known as lipid I. This is Phospho-N-acetylmuramoyl-pentapeptide-transferase from Shewanella amazonensis (strain ATCC BAA-1098 / SB2B).